We begin with the raw amino-acid sequence, 448 residues long: Omega-6 fatty acid desaturase, chloroplastic (448 aa).

The transit peptide at 1 to 69 (MASRIADSLF…VKRRIGCIKA (69 aa)) directs the protein to the chloroplast. Position 70 is an N-acetylvaline (V70). 2 consecutive transmembrane segments (helical) span residues 124-144 (LKALKSVLISVTSYTLGLFMI) and 149-169 (WYLLPLAWAWTGTAITGFFVI). A Histidine box-1 motif is present at residues 171–175 (HDCAH). The short motif at 207 to 211 (HDRHH) is the Histidine box-2 element. 2 consecutive transmembrane segments (helical) span residues 282-302 (VFAFMAVGWPLIVYKVGILGW) and 303-323 (VKFWLMPWLGYHFWMSTFTMV). A Histidine box-3 motif is present at residues 367–371 (HIPHH).

This sequence belongs to the fatty acid desaturase type 1 family.

It is found in the plastid. The protein resides in the chloroplast inner membrane. It catalyses the reaction a (9Z)-octadecenoyl-containing glycerolipid + 2 reduced [2Fe-2S]-[ferredoxin] + O2 + 2 H(+) = a (9Z,12Z)-octadecadienoyl-containing glycerolipid + 2 oxidized [2Fe-2S]-[ferredoxin] + 2 H2O. Its pathway is lipid metabolism; polyunsaturated fatty acid biosynthesis. Its function is as follows. Chloroplast omega-6 fatty acid desaturase introduces the second double bond in the biosynthesis of 16:3 and 18:3 fatty acids, important constituents of plant membranes. It is thought to use ferredoxin as an electron donor and to act on fatty acids esterified to galactolipids, sulfolipids and phosphatidylglycerol. The chain is Omega-6 fatty acid desaturase, chloroplastic from Arabidopsis thaliana (Mouse-ear cress).